The following is a 285-amino-acid chain: Golgi to ER traffic protein 2 (285 aa).

Residues 1–10 show a composition bias toward basic and acidic residues; that stretch reads MSELTEAEKR. Positions 1–71 are disordered; sequence MSELTEAEKR…HSATPDIKED (71 aa). Residue S2 is modified to N-acetylserine. Topologically, residues 2-148 are cytoplasmic; the sequence is SELTEAEKRR…LDYHDYLLNR (147 aa). Residues 11-20 are compositionally biased toward basic residues; it reads RLLRERRQKK. Positions 24–42 are enriched in polar residues; sequence GGASSRLNKITGQASSHLN. At S45 the chain carries Phosphoserine. A compositionally biased stretch (low complexity) spans 49–60; the sequence is APSAAKATPPAS. A helical transmembrane segment spans residues 149–169; it reads LKAWTILVKWVFFLLPYLYLI. Over 170–196 the chain is Lumenal; the sequence is TRPNSSVWPAYAFTQSAWFAPLRNPSN. Residues N173 and N196 are each glycosylated (N-linked (GlcNAc...) asparagine). Residues 197–216 form a helical membrane-spanning segment; the sequence is FTRIFATFEFLSISIYYQLL. The Cytoplasmic portion of the chain corresponds to 217 to 263; the sequence is KNVEHKSKIKNLQDTNKLVKLVSLVPEGVIPVANLKGKLITLLQYWD. A helical transmembrane segment spans residues 264 to 284; the sequence is LLSMLITDISFVLIVLGLLTY. A topological domain (lumenal) is located at residue L285.

This sequence belongs to the GET2 family. In terms of assembly, component of the Golgi to ER traffic (GET) complex, which is composed of GET1, GET2 and GET3. Within the complex, GET1 and GET2 form a heterotetramer which is stabilized by phosphatidylinositol binding and which binds to the GET3 homodimer.

Its subcellular location is the endoplasmic reticulum membrane. The protein resides in the golgi apparatus membrane. Functionally, required for the post-translational delivery of tail-anchored (TA) proteins to the endoplasmic reticulum. Together with GET1, acts as a membrane receptor for soluble GET3, which recognizes and selectively binds the transmembrane domain of TA proteins in the cytosol. The GET complex cooperates with the HDEL receptor ERD2 to mediate the ATP-dependent retrieval of resident ER proteins that contain a C-terminal H-D-E-L retention signal from the Golgi to the ER. Involved in DNA replication and DNA damage response and also in cell wall function. The protein is Golgi to ER traffic protein 2 of Saccharomyces cerevisiae (strain YJM789) (Baker's yeast).